We begin with the raw amino-acid sequence, 153 residues long: 6,7-dimethyl-8-ribityllumazine synthase (153 aa).

5-amino-6-(D-ribitylamino)uracil contacts are provided by residues F21, A55–E57, and C79–I81. Residue A84–T85 participates in (2S)-2-hydroxy-3-oxobutyl phosphate binding. Residue H87 is the Proton donor of the active site. F112 lines the 5-amino-6-(D-ribitylamino)uracil pocket. R126 serves as a coordination point for (2S)-2-hydroxy-3-oxobutyl phosphate.

The protein belongs to the DMRL synthase family. Forms an icosahedral capsid composed of 60 subunits, arranged as a dodecamer of pentamers.

The enzyme catalyses (2S)-2-hydroxy-3-oxobutyl phosphate + 5-amino-6-(D-ribitylamino)uracil = 6,7-dimethyl-8-(1-D-ribityl)lumazine + phosphate + 2 H2O + H(+). Its pathway is cofactor biosynthesis; riboflavin biosynthesis; riboflavin from 2-hydroxy-3-oxobutyl phosphate and 5-amino-6-(D-ribitylamino)uracil: step 1/2. Catalyzes the formation of 6,7-dimethyl-8-ribityllumazine by condensation of 5-amino-6-(D-ribitylamino)uracil with 3,4-dihydroxy-2-butanone 4-phosphate. This is the penultimate step in the biosynthesis of riboflavin. The protein is 6,7-dimethyl-8-ribityllumazine synthase of Staphylococcus epidermidis (strain ATCC 35984 / DSM 28319 / BCRC 17069 / CCUG 31568 / BM 3577 / RP62A).